A 362-amino-acid polypeptide reads, in one-letter code: Peptide chain release factor 1 (362 aa).

Glutamine 235 carries the N5-methylglutamine modification.

It belongs to the prokaryotic/mitochondrial release factor family. Post-translationally, methylated by PrmC. Methylation increases the termination efficiency of RF1.

The protein localises to the cytoplasm. Its function is as follows. Peptide chain release factor 1 directs the termination of translation in response to the peptide chain termination codons UAG and UAA. In Buchnera aphidicola subsp. Baizongia pistaciae (strain Bp), this protein is Peptide chain release factor 1.